Consider the following 491-residue polypeptide: Glutamyl-tRNA(Gln) amidotransferase subunit A (491 aa).

Catalysis depends on charge relay system residues K79 and S154. S178 (acyl-ester intermediate) is an active-site residue.

This sequence belongs to the amidase family. GatA subfamily. In terms of assembly, heterotrimer of A, B and C subunits.

The catalysed reaction is L-glutamyl-tRNA(Gln) + L-glutamine + ATP + H2O = L-glutaminyl-tRNA(Gln) + L-glutamate + ADP + phosphate + H(+). Allows the formation of correctly charged Gln-tRNA(Gln) through the transamidation of misacylated Glu-tRNA(Gln) in organisms which lack glutaminyl-tRNA synthetase. The reaction takes place in the presence of glutamine and ATP through an activated gamma-phospho-Glu-tRNA(Gln). This is Glutamyl-tRNA(Gln) amidotransferase subunit A from Synechococcus sp. (strain CC9902).